Reading from the N-terminus, the 406-residue chain is CinA-like protein (406 aa).

This sequence belongs to the CinA family.

This chain is CinA-like protein, found in Thermomicrobium roseum (strain ATCC 27502 / DSM 5159 / P-2).